The following is a 347-amino-acid chain: NADH-quinone oxidoreductase subunit H (347 aa).

8 helical membrane passes run 21–41 (VAGI…IIYA), 87–107 (GLFL…WAVI), 118–138 (INVG…GVIL), 157–177 (AQMI…VLFA), 195–215 (GIVN…MFLI), 258–278 (NVLL…LPPI), 283–303 (LYAV…FFVF), and 323–343 (WKIF…YLML).

This sequence belongs to the complex I subunit 1 family. In terms of assembly, NDH-1 is composed of 14 different subunits. Subunits NuoA, H, J, K, L, M, N constitute the membrane sector of the complex.

Its subcellular location is the cell inner membrane. The enzyme catalyses a quinone + NADH + 5 H(+)(in) = a quinol + NAD(+) + 4 H(+)(out). Functionally, NDH-1 shuttles electrons from NADH, via FMN and iron-sulfur (Fe-S) centers, to quinones in the respiratory chain. The immediate electron acceptor for the enzyme in this species is believed to be ubiquinone. Couples the redox reaction to proton translocation (for every two electrons transferred, four hydrogen ions are translocated across the cytoplasmic membrane), and thus conserves the redox energy in a proton gradient. This subunit may bind ubiquinone. The polypeptide is NADH-quinone oxidoreductase subunit H (Sphingopyxis alaskensis (strain DSM 13593 / LMG 18877 / RB2256) (Sphingomonas alaskensis)).